We begin with the raw amino-acid sequence, 160 residues long: Arsenate reductase 2.1 (160 aa).

The Rhodanese domain occupies 42-143 (SNPRVAIIDV…WELSGQPVCR (102 aa)). The active-site Cysteine persulfide intermediate is Cys-94.

It carries out the reaction [glutaredoxin]-dithiol + arsenate + glutathione + H(+) = glutathionyl-S-S-[glutaredoxin] + arsenite + H2O. Possesses arsenate reductase activity in vitro. Catalyzes the reduction of arsenate [As(V)] to arsenite [As(III)]. May play a role in arsenic retention in roots. Its function is as follows. Possesses phosphatase activity towards p-nitrophenyl phosphate in vitro. This Oryza sativa subsp. japonica (Rice) protein is Arsenate reductase 2.1 (ACR2.1).